The sequence spans 335 residues: Trans-3-hydroxy-L-proline dehydratase (335 aa).

Cysteine 91 acts as the Proton acceptor in catalysis. Substrate contacts are provided by residues 92–93, aspartate 251, and 256–257; these read GH and GS.

It belongs to the proline racemase family.

The enzyme catalyses trans-3-hydroxy-L-proline = 1-pyrroline-2-carboxylate + H2O. Catalyzes the dehydration of trans-3-hydroxy-L-proline (t3LHyp) to Delta(1)-pyrroline-2-carboxylate (Pyr2C). Is likely involved in a degradation pathway that converts t3LHyp to L-proline. Displays neither trans-4-hydroxy-L-proline (t4LHyp) epimerase nor proline racemase activity. The protein is Trans-3-hydroxy-L-proline dehydratase of Burkholderia ambifaria (strain ATCC BAA-244 / DSM 16087 / CCUG 44356 / LMG 19182 / AMMD) (Burkholderia cepacia (strain AMMD)).